A 286-amino-acid polypeptide reads, in one-letter code: Formamidopyrimidine-DNA glycosylase (286 aa).

Pro2 acts as the Schiff-base intermediate with DNA in catalysis. Glu3 functions as the Proton donor in the catalytic mechanism. Lys61 acts as the Proton donor; for beta-elimination activity in catalysis. DNA-binding residues include His96, Arg117, and Lys160. Residues 246 to 280 (DAYGREGLPCRRCATPMRRRPWMNRSSYFCPKCQR) form an FPG-type zinc finger. Residue Arg270 is the Proton donor; for delta-elimination activity of the active site.

Belongs to the FPG family. In terms of assembly, monomer. Zn(2+) is required as a cofactor.

The catalysed reaction is Hydrolysis of DNA containing ring-opened 7-methylguanine residues, releasing 2,6-diamino-4-hydroxy-5-(N-methyl)formamidopyrimidine.. The enzyme catalyses 2'-deoxyribonucleotide-(2'-deoxyribose 5'-phosphate)-2'-deoxyribonucleotide-DNA = a 3'-end 2'-deoxyribonucleotide-(2,3-dehydro-2,3-deoxyribose 5'-phosphate)-DNA + a 5'-end 5'-phospho-2'-deoxyribonucleoside-DNA + H(+). In terms of biological role, involved in base excision repair of DNA damaged by oxidation or by mutagenic agents. Acts as a DNA glycosylase that recognizes and removes damaged bases. Has a preference for oxidized purines, such as 7,8-dihydro-8-oxoguanine (8-oxoG). Has AP (apurinic/apyrimidinic) lyase activity and introduces nicks in the DNA strand. Cleaves the DNA backbone by beta-delta elimination to generate a single-strand break at the site of the removed base with both 3'- and 5'-phosphates. The protein is Formamidopyrimidine-DNA glycosylase of Streptomyces avermitilis (strain ATCC 31267 / DSM 46492 / JCM 5070 / NBRC 14893 / NCIMB 12804 / NRRL 8165 / MA-4680).